The sequence spans 257 residues: UPF0246 protein HAPS_0280 (257 aa).

The protein belongs to the UPF0246 family.

The protein is UPF0246 protein HAPS_0280 of Glaesserella parasuis serovar 5 (strain SH0165) (Haemophilus parasuis).